We begin with the raw amino-acid sequence, 272 residues long: tRNA pseudouridine synthase B (272 aa).

The active-site Nucleophile is the D38.

It belongs to the pseudouridine synthase TruB family. Type 1 subfamily.

It catalyses the reaction uridine(55) in tRNA = pseudouridine(55) in tRNA. Its function is as follows. Responsible for synthesis of pseudouridine from uracil-55 in the psi GC loop of transfer RNAs. The chain is tRNA pseudouridine synthase B from Campylobacter jejuni (strain RM1221).